Reading from the N-terminus, the 347-residue chain is MEEQLIPIQWKDDALVLLDQTLLPNEIVYESFKTAESVWDAIQVMKVRGAPAIGVSAAYGVYLGIKEFAESTEEGFMDEVRKVCTYLATSRPTAVNLFWALERMESVATDNIHLSISQLKNRLLEEAKEIHREDEEINRQIGEHALTLFHDGMGVLTHCNAGALATTKYGTATAPMYLAKEKGWDLKIYSDETRPRLQGSTLTALELQRAGIDVTVITDNMAAMVMSQGKIDAVIVGCDRVAANGDVANKIGTLGVSILAKYYNIPFYVAAPTPTIDLKTSTGKEIPIEERDASEVINRFGKYSAPKESKVYNPAFDVTPHENVTAIITEKGIVKAPFTENLKKLFQ.

Substrate-binding positions include 48–50 (RGA), R91, and Q198. The active-site Proton donor is the D239. Substrate is bound at residue 249–250 (NK).

It belongs to the EIF-2B alpha/beta/delta subunits family. DrdI subfamily.

It carries out the reaction 5-deoxy-alpha-D-ribose 1-phosphate = 5-deoxy-D-ribulose 1-phosphate. Its pathway is carbohydrate degradation. Its function is as follows. Catalyzes the isomerization of 5-deoxy-alpha-D-ribose 1-phosphate to 5-deoxy-D-ribulose 1-phosphate, as part of a 5-deoxyribose salvage pathway that recycles this toxic radical SAM enzyme by-product to mainstream metabolites. The sequence is that of 5-deoxyribose 1-phosphate isomerase from Bacillus cereus (strain ATCC 14579 / DSM 31 / CCUG 7414 / JCM 2152 / NBRC 15305 / NCIMB 9373 / NCTC 2599 / NRRL B-3711).